A 448-amino-acid polypeptide reads, in one-letter code: Probable D-serine dehydratase (448 aa).

Lys-119 carries the N6-(pyridoxal phosphate)lysine modification.

This sequence belongs to the serine/threonine dehydratase family. DsdA subfamily. Requires pyridoxal 5'-phosphate as cofactor.

It catalyses the reaction D-serine = pyruvate + NH4(+). The protein is Probable D-serine dehydratase of Chromobacterium violaceum (strain ATCC 12472 / DSM 30191 / JCM 1249 / CCUG 213 / NBRC 12614 / NCIMB 9131 / NCTC 9757 / MK).